Reading from the N-terminus, the 109-residue chain is uncharacterized protein (109 aa).

This is an uncharacterized protein from Caenorhabditis elegans.